Reading from the N-terminus, the 540-residue chain is Signal peptide peptidase-like 2 (540 aa).

The signal sequence occupies residues 1 to 27 (MDSLRFLRILLLSSSILLLSLRSTVTA). The Lumenal portion of the chain corresponds to 28–196 (GDIVHQDNLA…PRRPAVDVAE (169 aa)). N-linked (GlcNAc...) asparagine glycosylation occurs at asparagine 83. One can recognise a PA domain in the interval 95–173 (SCTPLKNKLS…QDAGASLQKM (79 aa)). Residue asparagine 176 is glycosylated (N-linked (GlcNAc...) asparagine). A helical membrane pass occupies residues 197–217 (VFLWLMAIGTILCASYWSAWS). The Cytoplasmic segment spans residues 218-248 (AREAAIEHDKLLKDAIDEIPNTNDGGSGVVE). Residues 249-269 (INSISAIFFVVLASGFLVILY) form a helical membrane-spanning segment. At 270–278 (KLMSYWFVE) the chain is on the lumenal side. The helical transmembrane segment at 279–299 (LLVVVFCIGGVEGLQTCLVAL) threads the bilayer. The Cytoplasmic segment spans residues 300–319 (LSRWFQRAADTYVKVPFLGP). The chain crosses the membrane as a helical span at residues 320–340 (ISYLTLAVSPFCIVFAVLWAV). The Lumenal segment spans residues 341–345 (YRVHS). Residues 346 to 366 (FAWIGQDVLGIALIITVLQIV) form a helical membrane-spanning segment. At 367-370 (HVPN) the chain is on the cytoplasmic side. The chain crosses the membrane as a helical span at residues 371–391 (LKVGTVLLSCAFLYDIFWVFV). The active site involves aspartate 385. Topologically, residues 392–429 (SKKLFHESVMIVVARGDKSGEDGIPMLLKIPRMFDPWG) are lumenal. The helical transmembrane segment at 430–450 (GYSIIGFGDILLPGLLIAFAL) threads the bilayer. The active site involves aspartate 438. The Cytoplasmic portion of the chain corresponds to 451–462 (RYDWLANKTLRT). A helical membrane pass occupies residues 463-483 (GYFIWAMVAYGLGLLITYVAL). Residues 484-488 (NLMDG) are Lumenal-facing. Residues 489-509 (HGQPALLYIVPFTLGTMLTLA) traverse the membrane as a helical segment. The PAL motif lies at 492–494 (PAL). Residues 510 to 540 (RKRDDLWILWTKGEPERACPHHVRLEQCSEK) are Cytoplasmic-facing.

The protein belongs to the peptidase A22B family. In terms of processing, glycosylated. In terms of tissue distribution, ubiquitous.

It is found in the endosome membrane. Intramembrane-cleaving aspartic protease (I-CLiP) that cleaves type II membrane signal peptides in the hydrophobic plane of the membrane. This chain is Signal peptide peptidase-like 2 (SPPL2), found in Arabidopsis thaliana (Mouse-ear cress).